The chain runs to 721 residues: Polyphosphate kinase (721 aa).

ATP is bound at residue N47. Residues R377 and R407 each coordinate Mg(2+). H437 functions as the Phosphohistidine intermediate in the catalytic mechanism. Y471, R567, and H595 together coordinate ATP.

Belongs to the polyphosphate kinase 1 (PPK1) family. It depends on Mg(2+) as a cofactor. Post-translationally, an intermediate of this reaction is the autophosphorylated ppk in which a phosphate is covalently linked to a histidine residue through a N-P bond.

The enzyme catalyses [phosphate](n) + ATP = [phosphate](n+1) + ADP. Functionally, catalyzes the reversible transfer of the terminal phosphate of ATP to form a long-chain polyphosphate (polyP). This Exiguobacterium sp. (strain ATCC BAA-1283 / AT1b) protein is Polyphosphate kinase.